A 120-amino-acid chain; its full sequence is uncharacterized protein (120 aa).

An N-terminal signal peptide occupies residues 1–19 (MTSFAVVARLITRAPRVRA). Disordered stretches follow at residues 48–71 (VAKK…DKAK) and 90–120 (DTVT…KNLK). Basic and acidic residues predominate over residues 90-103 (DTVTGKTEETKESI).

This is an uncharacterized protein from Arabidopsis thaliana (Mouse-ear cress).